We begin with the raw amino-acid sequence, 313 residues long: Potassium channel subfamily K member 6 (313 aa).

Topologically, residues 1 to 4 (MRRG) are cytoplasmic. A helical transmembrane segment spans residues 5 to 25 (ALLASALAAYAGYLALGALLV). N79 and N85 each carry an N-linked (GlcNAc...) asparagine glycan. Residues 90-115 (AWDFASALFFASTLVTTVGYGYTTPL) constitute an intramembrane region (pore-forming). 4 residues coordinate K(+): T106, V107, G108, and Y109. Positions 106-111 (TVGYGY) are selectivity filter 1. The helical transmembrane segment at 121–141 (AFSIVFALLGVPITMLLLTAS) threads the bilayer. Topologically, residues 142–172 (AQRLSLLLTHAPLSWLSLHWGWPPQRAARWH) are cytoplasmic. Residues 173-193 (LVALLMVIVAIFFLVPAAVFA) traverse the membrane as a helical segment. The segment at residues 199-223 (WSFLDAFYFCFISLSTIGLGDYVPG) is an intramembrane region (pore-forming). Residues T214, I215, and G216 each contribute to the K(+) site. The segment at 214–219 (TIGLGD) is selectivity filter 2. The chain crosses the membrane as a helical span at residues 236–256 (VLVTAYLFLGLVAMVLVLQTF). The Cytoplasmic segment spans residues 257 to 313 (RRVSDLHGLTELILLPDPDPASLSQDEDDQVAVLDARTDLHQHLSAASHADYASIPR). Short sequence motifs (lysosomal targeting signal) lie at residues 282 to 290 (DEDDQVAVL) and 308 to 312 (YASIP).

The protein belongs to the two pore domain potassium channel (TC 1.A.1.8) family. Homodimer; disulfide-linked. N-glycosylation is necessary for targeting to lysosomes.

The protein localises to the late endosome membrane. Its subcellular location is the lysosome membrane. The enzyme catalyses K(+)(in) = K(+)(out). Functionally, k(+) channel that conducts outward rectifying currents at the membranes of the endolysosomal system. Active in lysosomes where it regulates lysosome numbers and size. In macrophages, enables K(+) efflux coupled to ATP-induced NLRP3 inflammasome activation upon bacterial infection. Cooperates with ATP-gated P2RX7 to activate NLRP3 inflammasome, with P2RX7 conducting Ca(2+) and Na(+) influx that sets the membrane potential for K(+) efflux. The sequence is that of Potassium channel subfamily K member 6 from Mus musculus (Mouse).